A 264-amino-acid polypeptide reads, in one-letter code: Acyl-[acyl-carrier-protein]--UDP-N-acetylglucosamine O-acyltransferase (264 aa).

The protein belongs to the transferase hexapeptide repeat family. LpxA subfamily. In terms of assembly, homotrimer.

Its subcellular location is the cytoplasm. The catalysed reaction is a (3R)-hydroxyacyl-[ACP] + UDP-N-acetyl-alpha-D-glucosamine = a UDP-3-O-[(3R)-3-hydroxyacyl]-N-acetyl-alpha-D-glucosamine + holo-[ACP]. Its pathway is glycolipid biosynthesis; lipid IV(A) biosynthesis; lipid IV(A) from (3R)-3-hydroxytetradecanoyl-[acyl-carrier-protein] and UDP-N-acetyl-alpha-D-glucosamine: step 1/6. Its function is as follows. Involved in the biosynthesis of lipid A, a phosphorylated glycolipid that anchors the lipopolysaccharide to the outer membrane of the cell. The sequence is that of Acyl-[acyl-carrier-protein]--UDP-N-acetylglucosamine O-acyltransferase from Rickettsia africae (strain ESF-5).